A 136-amino-acid polypeptide reads, in one-letter code: Protein NrdI (136 aa).

It belongs to the NrdI family.

In terms of biological role, probably involved in ribonucleotide reductase function. The polypeptide is Protein NrdI (Salmonella newport (strain SL254)).